Reading from the N-terminus, the 192-residue chain is Xanthine phosphoribosyltransferase (192 aa).

The xanthine site is built by L20 and N27. 5-phospho-alpha-D-ribose 1-diphosphate is bound at residue A128–A132. K156 contributes to the xanthine binding site.

It belongs to the purine/pyrimidine phosphoribosyltransferase family. Xpt subfamily. As to quaternary structure, homodimer.

It is found in the cytoplasm. It catalyses the reaction XMP + diphosphate = xanthine + 5-phospho-alpha-D-ribose 1-diphosphate. Its pathway is purine metabolism; XMP biosynthesis via salvage pathway; XMP from xanthine: step 1/1. Functionally, converts the preformed base xanthine, a product of nucleic acid breakdown, to xanthosine 5'-monophosphate (XMP), so it can be reused for RNA or DNA synthesis. This chain is Xanthine phosphoribosyltransferase, found in Lactobacillus helveticus (strain DPC 4571).